A 198-amino-acid chain; its full sequence is Sorcin (198 aa).

4 EF-hand domains span residues 45 to 64, 70 to 98, 100 to 135, and 151 to 169; these read QDGQ…SGIA, FNLE…FKEL, AVLN…MGFR, and SGKI…LRAL. The Ca(2+) site is built by Asp-83, Asp-85, Ser-87, Thr-89, Glu-94, Asp-113, Asp-115, Ser-117, Thr-119, and Glu-124. Residue Ser-178 is modified to Phosphoserine.

As to quaternary structure, homodimer. Interacts with GCA, RYR2 and ANXA7. As to expression, detected in cardiac myocytes.

Its subcellular location is the cytoplasm. The protein resides in the sarcoplasmic reticulum membrane. Its function is as follows. Calcium-binding protein that modulates excitation-contraction coupling in the heart. Contributes to calcium homeostasis in the heart sarcoplasmic reticulum. Modulates the activity of RYR2 calcium channels. In Mus musculus (Mouse), this protein is Sorcin (Sri).